We begin with the raw amino-acid sequence, 510 residues long: Histidine ammonia-lyase (510 aa).

Residues 143–145 (ASG) constitute a cross-link (5-imidazolinone (Ala-Gly)). At Ser144 the chain carries 2,3-didehydroalanine (Ser).

Belongs to the PAL/histidase family. Post-translationally, contains an active site 4-methylidene-imidazol-5-one (MIO), which is formed autocatalytically by cyclization and dehydration of residues Ala-Ser-Gly.

It localises to the cytoplasm. It carries out the reaction L-histidine = trans-urocanate + NH4(+). It functions in the pathway amino-acid degradation; L-histidine degradation into L-glutamate; N-formimidoyl-L-glutamate from L-histidine: step 1/3. In Pseudomonas putida (strain ATCC 47054 / DSM 6125 / CFBP 8728 / NCIMB 11950 / KT2440), this protein is Histidine ammonia-lyase.